The sequence spans 271 residues: MKKKLKTFSLILLTGSLLVACGRGEVSSHSATLWEQIVYAFAKSIQWLSFNHSIGLGIILFTLIIRAIMMPLYNMQMKSSQKMQEIQPRLKELQKKYPGKDPDSRLKLNDEMQSMYKAEGVNPYASVLPLLIQLPVLWALFQALTRVSFLKVGTFLSLELSQPDPYYILPVLAALFTFLSTWLTNKAAVEKNIALTLMTYVMPFIILVTSFNFASGVVLYWTVSNAFQVFQILLLNNPYKIIKVREEAVRVAHEKEQRVKRAKRKASKKRK.

The first 20 residues, 1 to 20 (MKKKLKTFSLILLTGSLLVA), serve as a signal peptide directing secretion. The N-palmitoyl cysteine moiety is linked to residue cysteine 21. A lipid anchor (S-diacylglycerol cysteine) is attached at cysteine 21. The next 4 helical transmembrane spans lie at 45–65 (IQWLSFNHSIGLGIILFTLII), 124–144 (YASVLPLLIQLPVLWALFQAL), 163–183 (PDPYYILPVLAALFTFLSTWL), and 201–221 (VMPFIILVTSFNFASGVVLYW).

Belongs to the OXA1/ALB3/YidC family. Type 2 subfamily.

The protein localises to the cell membrane. Required for the insertion and/or proper folding and/or complex formation of integral membrane proteins into the membrane. Involved in integration of membrane proteins that insert both dependently and independently of the Sec translocase complex, as well as at least some lipoproteins. In Streptococcus agalactiae serotype III (strain NEM316), this protein is Membrane protein insertase YidC 1.